The following is a 506-amino-acid chain: Glutamate--tRNA ligase (506 aa).

The 'HIGH' region motif lies at 24 to 34 (PSPTGLQHIGG). The Zn(2+) site is built by Cys-121, Cys-123, Cys-148, and His-150. The 'KMSKS' region signature appears at 266-270 (KLSKR). An ATP-binding site is contributed by Lys-269.

Belongs to the class-I aminoacyl-tRNA synthetase family. Glutamate--tRNA ligase type 1 subfamily. As to quaternary structure, monomer. Zn(2+) is required as a cofactor.

It localises to the cytoplasm. It carries out the reaction tRNA(Glu) + L-glutamate + ATP = L-glutamyl-tRNA(Glu) + AMP + diphosphate. Its function is as follows. Catalyzes the attachment of glutamate to tRNA(Glu) in a two-step reaction: glutamate is first activated by ATP to form Glu-AMP and then transferred to the acceptor end of tRNA(Glu). This chain is Glutamate--tRNA ligase, found in Borrelia duttonii (strain Ly).